The sequence spans 562 residues: Urocanate hydratase (562 aa).

NAD(+) is bound by residues 53–54 (GG), Q131, 177–179 (GMG), E197, R202, 243–244 (NA), 268–272 (QTSAH), 278–279 (YL), and Y327. C415 is a catalytic residue. Residue G497 coordinates NAD(+).

It belongs to the urocanase family. It depends on NAD(+) as a cofactor.

The protein localises to the cytoplasm. It carries out the reaction 4-imidazolone-5-propanoate = trans-urocanate + H2O. It participates in amino-acid degradation; L-histidine degradation into L-glutamate; N-formimidoyl-L-glutamate from L-histidine: step 2/3. Functionally, catalyzes the conversion of urocanate to 4-imidazolone-5-propionate. The protein is Urocanate hydratase of Chelativorans sp. (strain BNC1).